We begin with the raw amino-acid sequence, 146 residues long: Angiogenin (146 aa).

Positions 1-24 are cleaved as a signal peptide; that stretch reads MVMGPHLLLLVFILGLGLTPPTLA. Glutamine 25 carries the post-translational modification Pyrrolidone carboxylic acid. The Proton acceptor role is filled by histidine 37. Disulfide bonds link cysteine 50-cysteine 105, cysteine 63-cysteine 116, and cysteine 81-cysteine 131. The short motif at 55–59 is the Nucleolar localization signal element; that stretch reads RLRNM. Positions 105 and 127 each coordinate tRNA. Histidine 138 acts as the Proton donor in catalysis.

This sequence belongs to the pancreatic ribonuclease family. In terms of assembly, homodimer. Interacts with RNH1; inhibiting ANG ribonuclease activity. Interacts with PCNA.

The protein localises to the secreted. It is found in the nucleus. It localises to the nucleolus. The protein resides in the cytoplasm. Its subcellular location is the stress granule. With respect to regulation, has weak tRNA ribonuclease activity by itself due to partial autoinhibition by its C-terminus, which folds into a short alpha-helix that partially occludes the substrate-binding site. In absence of stress, the ribonuclease activity is inhibited by RNH1 in the cytoplasm. In response to stress, dissociates from RNH1 in the cytoplasm and associates with cytoplasmic ribosomes with vacant A-sites: ribosomes directly activate the tRNA ribonuclease activity of ANG by refolding the C-terminal alpha-helix. In response to stress, the angiogenic activity of ANG is inhibited by RNH1 in the nucleus. Secreted ribonuclease that can either promote or restrict cell proliferation of target cells, depending on the context. Endocytosed in target cells via its receptor PLXNB2 and translocates to the cytoplasm or nucleus. Under stress conditions, localizes to the cytoplasm and promotes the assembly of stress granules (SGs): specifically cleaves a subset of tRNAs within anticodon loops to produce tRNA-derived stress-induced fragments (tiRNAs), resulting in translation repression and inhibition of cell proliferation. tiRNas also prevent formation of apoptosome, thereby promoting cell survival. Preferentially cleaves RNAs between a pyrimidine and an adenosine residue, suggesting that it cleaves the anticodon loop of tRNA(Ala) (32-UUAGCAU-38) after positions 33 and 36. Cleaves a subset of tRNAs, including tRNA(Ala), tRNA(Glu), tRNA(Gly), tRNA(Lys), tRNA(Val), tRNA(His), tRNA(Asp) and tRNA(Sec). Under growth conditions and in differentiated cells, translocates to the nucleus and stimulates ribosomal RNA (rRNA) transcription, including that containing the initiation site sequences of 45S rRNA, thereby promoting cell growth and proliferation. Angiogenin induces vascularization of normal and malignant tissues via its ability to promote rRNA transcription. Involved in hematopoietic stem and progenitor cell (HSPC) growth and survival by promoting rRNA transcription in growth conditions and inhibiting translation in response to stress, respectively. Mediates the crosstalk between myeloid and intestinal epithelial cells to protect the intestinal epithelial barrier integrity: secreted by myeloid cells and promotes intestinal epithelial cells proliferation and survival. Also mediates osteoclast-endothelial cell crosstalk in growing bone: produced by osteoclasts and protects the neighboring vascular cells against senescence by promoting rRNA transcription. The sequence is that of Angiogenin (ANG) from Saimiri sciureus (Common squirrel monkey).